The following is an 89-amino-acid chain: Small ribosomal subunit protein uS15 (89 aa).

Basic and acidic residues predominate over residues 1 to 21 (MVMTAEDKAQVIGEHKKHDGD). A disordered region spans residues 1–24 (MVMTAEDKAQVIGEHKKHDGDTGS).

The protein belongs to the universal ribosomal protein uS15 family. In terms of assembly, part of the 30S ribosomal subunit. Forms a bridge to the 50S subunit in the 70S ribosome, contacting the 23S rRNA.

In terms of biological role, one of the primary rRNA binding proteins, it binds directly to 16S rRNA where it helps nucleate assembly of the platform of the 30S subunit by binding and bridging several RNA helices of the 16S rRNA. Its function is as follows. Forms an intersubunit bridge (bridge B4) with the 23S rRNA of the 50S subunit in the ribosome. This Solidesulfovibrio magneticus (strain ATCC 700980 / DSM 13731 / RS-1) (Desulfovibrio magneticus) protein is Small ribosomal subunit protein uS15.